The sequence spans 118 residues: Large ribosomal subunit protein bL17 (118 aa).

This sequence belongs to the bacterial ribosomal protein bL17 family. Part of the 50S ribosomal subunit. Contacts protein L32.

This chain is Large ribosomal subunit protein bL17, found in Phytoplasma australiense.